A 1411-amino-acid chain; its full sequence is Regulating synaptic membrane exocytosis protein 2 (1411 aa).

Positions 1-33 are disordered; the sequence is MSAPVGPRGRLAPIPAASQPPLQPEMPDLSHLT. One can recognise a RabBD domain in the interval 26 to 185; it reads MPDLSHLTEE…TKSGAWFYNS (160 aa). An FYVE-type zinc finger spans residues 117–173; it reads KGDAPTCGICHKTKFADGCGHNCSYCQTKFCARCGGRVSLRSNKVMWVCNLCRKQQE. Zn(2+) contacts are provided by Cys123, Cys126, Cys139, Cys142, Cys147, Cys150, Cys165, and Cys168. Basic and acidic residues-rich tracts occupy residues 203-216, 273-287, 318-329, 348-366, 382-401, and 410-434; these read NEEA…KLHE, DQNR…REEY, DSDHLSYRDSNR, RDEY…RYRS, EQMR…RHSD, and EDSR…RRAA. Disordered stretches follow at residues 203 to 598 and 623 to 650; these read NEEA…SERQ and SGVD…WQPS. A Phosphoserine modification is found at Ser400. Positions 451-463 are enriched in polar residues; it reads GPSSYAQRTTNHS. Positions 475–492 are enriched in basic and acidic residues; the sequence is DRPDLRRTDSLRKQHHLD. Residues 510–521 show a composition bias toward polar residues; it reads RNDSLSSDQSES. Positions 528 to 537 are enriched in basic residues; that stretch reads KPHKSKKGGK. Residues 558–568 show a composition bias toward acidic residues; that stretch reads SCDDVEIESES. Composition is skewed to basic and acidic residues over residues 569 to 583 and 634 to 644; these read VSEK…RKTS and NEEHSHSDKHP. The PDZ domain maps to 668–754; the sequence is DGSVPRDSGA…EPQVELVVSR (87 aa). Thr689 carries the post-translational modification Phosphothreonine. A disordered region spans residues 762–793; the sequence is IPDSTHAQLESSSSSFESQKMDRPSISVTSPM. Residues Ser791 and Ser794 each carry the phosphoserine modification. Positions 805-928 constitute a C2 1 domain; it reads LSGQLSIKLW…ALLDDEPHWY (124 aa). Disordered regions lie at residues 939–973 and 993–1190; these read PLPH…SEVS and DLQS…STET. Composition is skewed to polar residues over residues 994-1015 and 1049-1059; these read LQSS…SPSG and RTMTGHYNTIS. Over residues 1060-1113 the composition is skewed to basic and acidic residues; that stretch reads RMDRHRVMDDHYSPDRDRDCEAADRQPYHRSRSTEQRPLLERTTTRSRSTERPD. Over residues 1143–1153 the composition is skewed to polar residues; it reads GSVQTSPSSTP. Residue Ser1148 is modified to Phosphoserine. The 119-residue stretch at 1257 to 1375 folds into the C2 2 domain; the sequence is AMGDIQVGMM…ELSNMVIGWF (119 aa). Residues Ser1396 and Ser1399 each carry the phosphoserine modification.

Interacts with RAB3A and RAB3B that have been activated by GTP-binding. Interacts with RAB3C, RAB3D and RAB26. Interacts with TSPOAP1 and RIMBP2. Interacts with PPFIA3 and PPFIA4. Interacts via its zinc finger with the first C2 domain of UNC13A. Forms a complex consisting of UNC13A, RIMS2 and RAB3A. Heterodimer with PCLO. Part of a ternary complex involving PCLO and EPAC2. In terms of tissue distribution, widely expressed. Expressed in melanocytes. In fetal tissues, predominantly expressed in the brain. In the retina, expressed in the outer plexiform layer (at protein level). In the cerebellum, expressed in Purkinje cells (at protein level). In the pancreas, expressed in Langerhans islets (at protein level).

Its subcellular location is the cell membrane. It is found in the synapse. It localises to the presynaptic cell membrane. Functionally, rab effector involved in exocytosis. May act as scaffold protein. Plays a role in dendrite formation by melanocytes. The sequence is that of Regulating synaptic membrane exocytosis protein 2 (RIMS2) from Homo sapiens (Human).